A 92-amino-acid chain; its full sequence is Large ribosomal subunit protein eL43 (92 aa).

The segment at 39-60 (CSFCGKKTVRRGAAGIWSCHSC) adopts a C4-type zinc-finger fold.

Belongs to the eukaryotic ribosomal protein eL43 family.

This is Large ribosomal subunit protein eL43 (RPL43) from Candida glabrata (strain ATCC 2001 / BCRC 20586 / JCM 3761 / NBRC 0622 / NRRL Y-65 / CBS 138) (Yeast).